Reading from the N-terminus, the 73-residue chain is Ubiquitin-like protein 5 (73 aa).

Positions 1–73 (MIEITCNDRL…DGMNLELYYQ (73 aa)) constitute a Ubiquitin-like domain.

Its subcellular location is the cytoplasm. This is Ubiquitin-like protein 5 (ubl) from Drosophila melanogaster (Fruit fly).